The chain runs to 80 residues: Crustacean hyperglycemic hormones (80 aa).

Intrachain disulfides connect Cys-13-Cys-49, Cys-29-Cys-45, and Cys-32-Cys-58. Residue Val-78 is modified to Valine amide.

The protein belongs to the arthropod CHH/MIH/GIH/VIH hormone family. As to expression, produced by the medulla terminalis X-organ in the eyestalks and transported to the sinus gland where they are stored and released.

The protein localises to the secreted. Its function is as follows. Hormone found in the sinus gland of isopods and decapods which controls the blood sugar level. Has a secretagogue action over the amylase released from the midgut gland. May act as a stress hormone and may be involved in the control of molting and reproduction. The chain is Crustacean hyperglycemic hormones from Penaeus vannamei (Whiteleg shrimp).